The primary structure comprises 487 residues: Calcium-dependent mitochondrial ATP-magnesium/phosphate carrier protein 2 (487 aa).

Topologically, residues 1 to 211 (MEATKSSKQN…ISKHIKRSNY (211 aa)) are mitochondrial intermembrane. 4 EF-hand domains span residues 36-71 (ERDL…LQIP), 72-107 (SGYK…KELE), 108-138 (LYRI…AGIE), and 139-174 (IKDE…YPHE). Ca(2+) is bound by residues D85, N87, D89, R91, and E96. Residues D152, D154, D156, and E163 each contribute to the Ca(2+) site. 3 Solcar repeats span residues 206-289 (IKRS…FKNA), 301-389 (IGTT…LKDL), and 400-483 (PGPL…MKKS). A helical transmembrane segment spans residues 212–229 (FIAGGIAGAASRTATAPL). Topologically, residues 230-263 (DRLKVLLQIQKTDARIREAIKLIWKQGGVRGFFR) are mitochondrial matrix. Residues 264 to 283 (GNGLNIVKVAPESAIKFYAY) form a helical membrane-spanning segment. The Mitochondrial intermembrane segment spans residues 284–310 (ELFKNAIGENMGEDKADIGTTVRLFAG). Residues 311-324 (GMAGAVAQASIYPL) traverse the membrane as a helical segment. Residues 325–363 (DLVKTRLQTYTSQAGVAVPRLGTLTKDILVHEGPRAFYK) are Mitochondrial matrix-facing. A helical transmembrane segment spans residues 364–383 (GLFPSLLGIIPYAGIDLAAY). At 384–405 (ETLKDLSRTYILQDAEPGPLVQ) the chain is on the mitochondrial intermembrane side. A helical transmembrane segment spans residues 406–423 (LGCGTISGALGATCVYPL). Residues 424 to 457 (QVVRTRMQAERARTSMSGVFRRTISEEGYRALYK) are Mitochondrial matrix-facing. Residues 458–477 (GLLPNLLKVVPAASITYMVY) traverse the membrane as a helical segment. The Mitochondrial intermembrane segment spans residues 478–487 (EAMKKSLELD).

Belongs to the mitochondrial carrier (TC 2.A.29) family. As to expression, expressed in flowers, leaves, stems, roots and seedlings, mostly in aerial parts.

The protein localises to the mitochondrion inner membrane. Its activity is regulated as follows. Counter-exchange transport activity is saturable and inhibited by pyridoxal-5'-phosphate, EDTA and EGTA. Activated by calcium Ca(2+) and manganese Mn(2+) ions, and slightly by iron Fe(2+) and zinc Zn(2+) ions. Repressed by copper ions Cu(2+) and slightly by magnesium Mg(2+) ions. Magnesium Mg(2+) ions promotes slightly ATP uptake, ATP-Mg(2+) being exchanged with ATP(4-). Functionally, calcium-dependent mitochondrial carrier protein that catalyzes the import of ATP co-transported with metal divalent cations across the mitochondrial inner membrane in exchange for phosphate (Pi). Can transport phosphate, AMP, ADP, ATP, adenosine 5'-phosphosulfate, sulfate and thiosulfate, and, to a lesser extent, other nucleotides. Binds calcium ions Ca(2+). Also mediates calcium uptake. This is Calcium-dependent mitochondrial ATP-magnesium/phosphate carrier protein 2 from Arabidopsis thaliana (Mouse-ear cress).